Consider the following 431-residue polypeptide: Divalent metal cation transporter MntH (431 aa).

Helical transmembrane passes span 30–50 (WSWT…IDPG), 63–83 (GYTL…IQTL), 106–126 (PLVW…DLAE), 137–159 (LFGL…ALHL), 169–189 (ILIG…LVLS), 209–229 (YALY…VIYL), 257–277 (VILG…MAAA), 287–307 (VATI…VTAS), 309–329 (VFGL…TLSG), 341–361 (IPLW…IMLG), 367–387 (ALVA…VPLL), and 405–425 (VTGV…YVLF).

The protein belongs to the NRAMP family.

The protein resides in the cell inner membrane. H(+)-stimulated, divalent metal cation uptake system. The protein is Divalent metal cation transporter MntH of Chromohalobacter salexigens (strain ATCC BAA-138 / DSM 3043 / CIP 106854 / NCIMB 13768 / 1H11).